Reading from the N-terminus, the 136-residue chain is MADSFKFDLVSPERLLVSETVTEVVIPATLGEMTVLANHAPTMTTIKPGLVTVKFASGETHKYVVFGGFADILPTGCTLLAESAVSADDMSPDTLQKRIDAAKAEIQEGNHHHEHLTKLEKHLYELTNLHEVLVAA.

Belongs to the ATPase epsilon chain family. In terms of assembly, F-type ATPases have 2 components, CF(1) - the catalytic core - and CF(0) - the membrane proton channel. CF(1) has five subunits: alpha(3), beta(3), gamma(1), delta(1), epsilon(1). CF(0) has three main subunits: a, b and c.

The protein localises to the cell inner membrane. Its function is as follows. Produces ATP from ADP in the presence of a proton gradient across the membrane. The chain is ATP synthase epsilon chain from Agrobacterium fabrum (strain C58 / ATCC 33970) (Agrobacterium tumefaciens (strain C58)).